The chain runs to 309 residues: Foldase protein PrsA 2 (309 aa).

The N-terminal stretch at Met-1–Gly-20 is a signal peptide. Cys-21 carries the N-palmitoyl cysteine lipid modification. Cys-21 carries the S-diacylglycerol cysteine lipid modification. In terms of domain architecture, PpiC spans Met-137–Tyr-232.

Belongs to the PrsA family.

It localises to the cell membrane. The enzyme catalyses [protein]-peptidylproline (omega=180) = [protein]-peptidylproline (omega=0). Plays a major role in protein secretion by helping the post-translocational extracellular folding of several secreted proteins. This chain is Foldase protein PrsA 2 (prsA2), found in Lactiplantibacillus plantarum (strain ATCC BAA-793 / NCIMB 8826 / WCFS1) (Lactobacillus plantarum).